A 441-amino-acid chain; its full sequence is 3-phosphoshikimate 1-carboxyvinyltransferase (441 aa).

The 3-phosphoshikimate site is built by lysine 25, serine 26, and arginine 30. Lysine 25 provides a ligand contact to phosphoenolpyruvate. The phosphoenolpyruvate site is built by glycine 97 and arginine 125. Residues serine 169, glutamine 170, aspartate 311, and lysine 338 each coordinate 3-phosphoshikimate. Glutamine 170 provides a ligand contact to phosphoenolpyruvate. Residue aspartate 311 is the Proton acceptor of the active site. Phosphoenolpyruvate is bound by residues arginine 342, arginine 383, and lysine 410.

Belongs to the EPSP synthase family. In terms of assembly, monomer.

The protein resides in the cytoplasm. The catalysed reaction is 3-phosphoshikimate + phosphoenolpyruvate = 5-O-(1-carboxyvinyl)-3-phosphoshikimate + phosphate. Its pathway is metabolic intermediate biosynthesis; chorismate biosynthesis; chorismate from D-erythrose 4-phosphate and phosphoenolpyruvate: step 6/7. Its function is as follows. Catalyzes the transfer of the enolpyruvyl moiety of phosphoenolpyruvate (PEP) to the 5-hydroxyl of shikimate-3-phosphate (S3P) to produce enolpyruvyl shikimate-3-phosphate and inorganic phosphate. This is 3-phosphoshikimate 1-carboxyvinyltransferase from Chlamydia muridarum (strain MoPn / Nigg).